Reading from the N-terminus, the 183-residue chain is Putative manganese efflux pump MntP (183 aa).

Helical transmembrane passes span 3–23, 43–63, 66–86, 107–127, 134–154, and 161–181; these read TISVLITALALSMDAMSLSIY, TFGIFQFAMALVGSLSGILFI, ISLYSKYVSFAIFLFLGLMML, LIIMGIATSLDALLVGLTFSI, FLYTVEIGVITAIIAGLGFIL, and ILGQKSHFLGAALLIFISINI.

The protein belongs to the MntP (TC 9.B.29) family.

It localises to the cell inner membrane. Probably functions as a manganese efflux pump. The polypeptide is Putative manganese efflux pump MntP (Fusobacterium nucleatum subsp. nucleatum (strain ATCC 25586 / DSM 15643 / BCRC 10681 / CIP 101130 / JCM 8532 / KCTC 2640 / LMG 13131 / VPI 4355)).